Reading from the N-terminus, the 613-residue chain is Dihydroxy-acid dehydratase (613 aa).

A Mg(2+)-binding site is contributed by aspartate 81. Cysteine 122 is a [2Fe-2S] cluster binding site. Mg(2+) contacts are provided by aspartate 123 and lysine 124. N6-carboxylysine is present on lysine 124. Cysteine 195 provides a ligand contact to [2Fe-2S] cluster. Glutamate 491 is a binding site for Mg(2+). The Proton acceptor role is filled by serine 517.

It belongs to the IlvD/Edd family. Homodimer. [2Fe-2S] cluster serves as cofactor. The cofactor is Mg(2+).

It carries out the reaction (2R)-2,3-dihydroxy-3-methylbutanoate = 3-methyl-2-oxobutanoate + H2O. It catalyses the reaction (2R,3R)-2,3-dihydroxy-3-methylpentanoate = (S)-3-methyl-2-oxopentanoate + H2O. It participates in amino-acid biosynthesis; L-isoleucine biosynthesis; L-isoleucine from 2-oxobutanoate: step 3/4. Its pathway is amino-acid biosynthesis; L-valine biosynthesis; L-valine from pyruvate: step 3/4. Its function is as follows. Functions in the biosynthesis of branched-chain amino acids. Catalyzes the dehydration of (2R,3R)-2,3-dihydroxy-3-methylpentanoate (2,3-dihydroxy-3-methylvalerate) into 2-oxo-3-methylpentanoate (2-oxo-3-methylvalerate) and of (2R)-2,3-dihydroxy-3-methylbutanoate (2,3-dihydroxyisovalerate) into 2-oxo-3-methylbutanoate (2-oxoisovalerate), the penultimate precursor to L-isoleucine and L-valine, respectively. The protein is Dihydroxy-acid dehydratase of Buchnera aphidicola subsp. Melaphis rhois.